The following is an 853-amino-acid chain: DNA mismatch repair protein MutS (853 aa).

ATP is bound at residue 613–620 (GPNMGGKS).

The protein belongs to the DNA mismatch repair MutS family.

Functionally, this protein is involved in the repair of mismatches in DNA. It is possible that it carries out the mismatch recognition step. This protein has a weak ATPase activity. This Vibrio parahaemolyticus serotype O3:K6 (strain RIMD 2210633) protein is DNA mismatch repair protein MutS.